The sequence spans 270 residues: MSRHATITQSYQERASLPKTSPVASYLLRLIAAKKTNLCVSADVSTTRELLQLAEEVGDSICMLKTHADIINDFGPRTIEGLKEIAAKKHFLVFEDRKFGDIGSTVQKQFTAGPLQIVRWANIINAHIFPGPAIITALSQARPRCRQLLILAEMSSAGNLMTGSYTEQCVVEARKNPEFVMGFIAQRTLNEQPGDNFITMTPGVQIGATGDGLGQQYNTPEKVIGEAGTDIIIVGRGVYGAQDKRAKAEEYRVRAWKAYEGNWRCYCNKR.

Residues Asp43, 65–67, 96–105, Tyr217, and Arg236 contribute to the substrate site; these read KTH and DRKFGDIGST. The Proton donor role is filled by Lys98.

The protein belongs to the OMP decarboxylase family.

It carries out the reaction orotidine 5'-phosphate + H(+) = UMP + CO2. The protein operates within pyrimidine metabolism; UMP biosynthesis via de novo pathway; UMP from orotate: step 2/2. The protein is Orotidine 5'-phosphate decarboxylase (URA3) of Aureobasidium pullulans (Black yeast).